Here is a 166-residue protein sequence, read N- to C-terminus: Vasopressin-neurophysin 2-copeptin (166 aa).

The first 19 residues, 1-19, serve as a signal peptide directing secretion; it reads MPDATLPACFLGLLALTSA. Cys-20 and Cys-25 are disulfide-bonded. Gly-28 carries the post-translational modification Glycine amide. Cystine bridges form between Cys-41-Cys-85, Cys-44-Cys-58, Cys-52-Cys-75, Cys-59-Cys-65, Cys-92-Cys-104, Cys-98-Cys-116, and Cys-105-Cys-110. Asn-133 carries N-linked (GlcNAc...) asparagine glycosylation.

Belongs to the vasopressin/oxytocin family. In terms of assembly, interacts with vasopressin receptors V1bR/AVPR1B (Ki=85 pM), V1aR/AVPR1A (Ki=0.6 nM) and V2R/AVPR2 (Ki=4.9 nM). Interacts with oxytocin receptor (OXTR) (Ki=110 nM). A shorter neurophysin molecule (32-123) is called neurophysin-I and is derived from the complete protein (called neurophysin III) by proteolytic degradation (in vivo or after extraction).

It is found in the secreted. Its function is as follows. Neurophysin 2 specifically binds vasopressin. In terms of biological role, vasopressin has a direct antidiuretic action on the kidney, it also causes vasoconstriction of the peripheral vessels. Acts by binding to vasopressin receptors (V1bR/AVPR1B, V1aR/AVPR1A, and V2R/AVPR2). This Sus scrofa (Pig) protein is Vasopressin-neurophysin 2-copeptin (AVP).